The chain runs to 576 residues: Urease subunit alpha (576 aa).

In terms of domain architecture, Urease spans 132–576 (GGIDTHIHFI…LPMAQRYFLF (445 aa)). Ni(2+) contacts are provided by His137, His139, and Lys220. Residue Lys220 is modified to N6-carboxylysine. Substrate is bound at residue His222. Ni(2+)-binding residues include His249 and His275. The Proton donor role is filled by His323. Ni(2+) is bound at residue Asp363.

The protein belongs to the metallo-dependent hydrolases superfamily. Urease alpha subunit family. Heterotrimer of UreA (gamma), UreB (beta) and UreC (alpha) subunits. Three heterotrimers associate to form the active enzyme. The cofactor is Ni cation. Carboxylation allows a single lysine to coordinate two nickel ions.

The protein localises to the cytoplasm. It catalyses the reaction urea + 2 H2O + H(+) = hydrogencarbonate + 2 NH4(+). The protein operates within nitrogen metabolism; urea degradation; CO(2) and NH(3) from urea (urease route): step 1/1. The polypeptide is Urease subunit alpha (Paenarthrobacter aurescens (strain TC1)).